Reading from the N-terminus, the 662-residue chain is MSEDRSAYPFSTFLDQHSGQLNASDVPPELWHSLYKKLSDQTFDAGDHFQIICEMNEDDEKTLFVRALEDLHNNDEDNIFLIDHFMSFSSESARKCVESTEGLVERLAGLFGIDTDSTEEVDETVEKIETSVEKEEAEHAKKISSETGNLPRHESVDARLSSYSVDDPKNELTEKVLKALWKYSQTYSVSYQLDNGEIEKKSVWYVMDDFGTRVRHSTEPNVRIVPLMFLPQNCAYSIMFLTKPVNTDEEIMMDWASNVITAQHPEWRKYIEQPWAAQDFSKETMIPDAPTLEYFTSGRNPDFLAGPTEQQTCQSAIFTSLPILKKRKIKVYADDTQLTEHLKNHKVEYVDDIKKADVIWMIKHFHDYKQLSEENPCGMINQFPFESCITVKDLLAACAMRDPAKNDWYQLTYNLNTQLPEFVARFQNRELNGQHNVWIVKPWNLARGMDMTVTEDLNQIIRMIETGPKIVCEYIPRPLLFPRPDNGNKVKFDLRYIVFLNGIAPVTAYVYNRFWIRFAINEFSLSNFEDVETHFTVFNYLDKEKILQMKCENFIETIEKAYPRIQWSEVQKDINLTIRKAIEAAAKEEAPRGVAPNVQSRAMYGVDIMLQHGDNDVIKSTLLEINFMPDTTRACQYYPDFADTVFETLFLDEIDPTKVTPI.

In terms of domain architecture, TTL spans 324-660 (LKKRKIKVYA…LDEIDPTKVT (337 aa)). ATP is bound by residues 472-475 (CEYI), Lys-491, and Asp-493.

This sequence belongs to the tubulin--tyrosine ligase family.

Regulates microtubule dynamics in uterine muscle cells. This Caenorhabditis elegans protein is Tubulin--tyrosine ligase-like protein 12.